A 92-amino-acid polypeptide reads, in one-letter code: Long neurotoxin 469 (92 aa).

The N-terminal stretch at 1–21 (MKTLLLTLVVVTIVCLDLGDS) is a signal peptide. Intrachain disulfides connect Cys-24–Cys-41, Cys-34–Cys-62, Cys-47–Cys-51, Cys-66–Cys-77, and Cys-78–Cys-83.

It belongs to the three-finger toxin family. Long-chain subfamily. Type II alpha-neurotoxin sub-subfamily. Expressed by the venom gland.

The protein localises to the secreted. Its function is as follows. Binds with high affinity to muscular (alpha-1/CHRNA1) and neuronal (alpha-7/CHRNA7) nicotinic acetylcholine receptor (nAChR) and inhibits acetylcholine from binding to the receptor, thereby impairing neuromuscular and neuronal transmission. The chain is Long neurotoxin 469 from Drysdalia coronoides (White-lipped snake).